The chain runs to 368 residues: Phosphate acyltransferase (368 aa).

The interval 335–368 (VSLGDGEHDAGGAGPASPAAGHHAEPSAAQSSKA) is disordered. A compositionally biased stretch (low complexity) spans 349–368 (PASPAAGHHAEPSAAQSSKA).

This sequence belongs to the PlsX family. Homodimer. Probably interacts with PlsY.

The protein resides in the cytoplasm. It catalyses the reaction a fatty acyl-[ACP] + phosphate = an acyl phosphate + holo-[ACP]. The protein operates within lipid metabolism; phospholipid metabolism. Catalyzes the reversible formation of acyl-phosphate (acyl-PO(4)) from acyl-[acyl-carrier-protein] (acyl-ACP). This enzyme utilizes acyl-ACP as fatty acyl donor, but not acyl-CoA. This chain is Phosphate acyltransferase, found in Burkholderia multivorans (strain ATCC 17616 / 249).